A 229-amino-acid chain; its full sequence is DNA mismatch repair protein MutH (229 aa).

This sequence belongs to the MutH family.

It is found in the cytoplasm. Its function is as follows. Sequence-specific endonuclease that cleaves unmethylated GATC sequences. It is involved in DNA mismatch repair. This is DNA mismatch repair protein MutH from Shigella boydii serotype 18 (strain CDC 3083-94 / BS512).